We begin with the raw amino-acid sequence, 233 residues long: Small ribosomal subunit protein uS3 (233 aa).

Residues 39 to 107 enclose the KH type-2 domain; it reads VRQFLMKTLE…PVQINISEVR (69 aa).

This sequence belongs to the universal ribosomal protein uS3 family. In terms of assembly, part of the 30S ribosomal subunit. Forms a tight complex with proteins S10 and S14.

Binds the lower part of the 30S subunit head. Binds mRNA in the 70S ribosome, positioning it for translation. The polypeptide is Small ribosomal subunit protein uS3 (Buchnera aphidicola subsp. Acyrthosiphon pisum (strain 5A)).